The chain runs to 29 residues: Cytochrome b6-f complex subunit 8 (29 aa).

Residues 3 to 23 (ILTLGWVSLLVVFTWSIAMVV) form a helical membrane-spanning segment.

The protein belongs to the PetN family. In terms of assembly, the 4 large subunits of the cytochrome b6-f complex are cytochrome b6, subunit IV (17 kDa polypeptide, PetD), cytochrome f and the Rieske protein, while the 4 small subunits are PetG, PetL, PetM and PetN. The complex functions as a dimer.

The protein localises to the cellular thylakoid membrane. Component of the cytochrome b6-f complex, which mediates electron transfer between photosystem II (PSII) and photosystem I (PSI), cyclic electron flow around PSI, and state transitions. The chain is Cytochrome b6-f complex subunit 8 from Nostoc punctiforme (strain ATCC 29133 / PCC 73102).